The primary structure comprises 340 residues: Coproporphyrin III ferrochelatase (340 aa).

The Fe-coproporphyrin III site is built by Ser52 and Tyr121. 2 residues coordinate Fe(2+): His181 and Glu264.

Belongs to the ferrochelatase family.

It localises to the cytoplasm. The enzyme catalyses Fe-coproporphyrin III + 2 H(+) = coproporphyrin III + Fe(2+). It participates in porphyrin-containing compound metabolism; protoheme biosynthesis. Its function is as follows. Involved in coproporphyrin-dependent heme b biosynthesis. Catalyzes the insertion of ferrous iron into coproporphyrin III to form Fe-coproporphyrin III. The protein is Coproporphyrin III ferrochelatase of Mycolicibacterium smegmatis (strain ATCC 700084 / mc(2)155) (Mycobacterium smegmatis).